The following is a 120-amino-acid chain: NAD(P)H-quinone oxidoreductase subunit 3 (120 aa).

Helical transmembrane passes span 6 to 26, 64 to 84, and 89 to 109; these read GYDA…LALI, MFAL…PWAV, and LGVL…VALA.

This sequence belongs to the complex I subunit 3 family. In terms of assembly, NDH-1 can be composed of about 15 different subunits; different subcomplexes with different compositions have been identified which probably have different functions.

The protein resides in the cellular thylakoid membrane. The catalysed reaction is a plastoquinone + NADH + (n+1) H(+)(in) = a plastoquinol + NAD(+) + n H(+)(out). It carries out the reaction a plastoquinone + NADPH + (n+1) H(+)(in) = a plastoquinol + NADP(+) + n H(+)(out). NDH-1 shuttles electrons from an unknown electron donor, via FMN and iron-sulfur (Fe-S) centers, to quinones in the respiratory and/or the photosynthetic chain. The immediate electron acceptor for the enzyme in this species is believed to be plastoquinone. Couples the redox reaction to proton translocation, and thus conserves the redox energy in a proton gradient. Cyanobacterial NDH-1 also plays a role in inorganic carbon-concentration. This chain is NAD(P)H-quinone oxidoreductase subunit 3, found in Parasynechococcus marenigrum (strain WH8102).